Here is a 374-residue protein sequence, read N- to C-terminus: Queuine tRNA-ribosyltransferase (374 aa).

Asp89 serves as the catalytic Proton acceptor. Residues 89–93 (DSGGF), Asp143, Gln187, and Gly214 each bind substrate. The RNA binding stretch occupies residues 245-251 (GVGKPED). Asp264 acts as the Nucleophile in catalysis. Residues 269–273 (TRNAR) are RNA binding; important for wobble base 34 recognition. The Zn(2+) site is built by Cys302, Cys304, Cys307, and His333.

Belongs to the queuine tRNA-ribosyltransferase family. As to quaternary structure, homodimer. Within each dimer, one monomer is responsible for RNA recognition and catalysis, while the other monomer binds to the replacement base PreQ1. Requires Zn(2+) as cofactor.

It catalyses the reaction 7-aminomethyl-7-carbaguanine + guanosine(34) in tRNA = 7-aminomethyl-7-carbaguanosine(34) in tRNA + guanine. Its pathway is tRNA modification; tRNA-queuosine biosynthesis. Functionally, catalyzes the base-exchange of a guanine (G) residue with the queuine precursor 7-aminomethyl-7-deazaguanine (PreQ1) at position 34 (anticodon wobble position) in tRNAs with GU(N) anticodons (tRNA-Asp, -Asn, -His and -Tyr). Catalysis occurs through a double-displacement mechanism. The nucleophile active site attacks the C1' of nucleotide 34 to detach the guanine base from the RNA, forming a covalent enzyme-RNA intermediate. The proton acceptor active site deprotonates the incoming PreQ1, allowing a nucleophilic attack on the C1' of the ribose to form the product. After dissociation, two additional enzymatic reactions on the tRNA convert PreQ1 to queuine (Q), resulting in the hypermodified nucleoside queuosine (7-(((4,5-cis-dihydroxy-2-cyclopenten-1-yl)amino)methyl)-7-deazaguanosine). This chain is Queuine tRNA-ribosyltransferase, found in Psychromonas ingrahamii (strain DSM 17664 / CCUG 51855 / 37).